A 70-amino-acid polypeptide reads, in one-letter code: Cytochrome c oxidase subunit 8B, mitochondrial (70 aa).

Residues 1–24 (MSRLAPPLRLLQAPLKCWAVPKAH) constitute a mitochondrion transit peptide. The Mitochondrial matrix segment spans residues 25-35 (VSAKPARTPTS). The chain crosses the membrane as a helical span at residues 36-59 (PMEQAVGLSVMFVSFLVPSGWVLS). The Mitochondrial intermembrane segment spans residues 60–70 (HLESYKKSSTT).

The protein belongs to the cytochrome c oxidase VIII family. In terms of assembly, component of the cytochrome c oxidase (complex IV, CIV), a multisubunit enzyme composed of 14 subunits. The complex is composed of a catalytic core of 3 subunits MT-CO1, MT-CO2 and MT-CO3, encoded in the mitochondrial DNA, and 11 supernumerary subunits COX4I, COX5A, COX5B, COX6A, COX6B, COX6C, COX7A, COX7B, COX7C, COX8 and NDUFA4, which are encoded in the nuclear genome. The complex exists as a monomer or a dimer and forms supercomplexes (SCs) in the inner mitochondrial membrane with NADH-ubiquinone oxidoreductase (complex I, CI) and ubiquinol-cytochrome c oxidoreductase (cytochrome b-c1 complex, complex III, CIII), resulting in different assemblies (supercomplex SCI(1)III(2)IV(1) and megacomplex MCI(2)III(2)IV(2)).

The protein resides in the mitochondrion inner membrane. It participates in energy metabolism; oxidative phosphorylation. Component of the cytochrome c oxidase, the last enzyme in the mitochondrial electron transport chain which drives oxidative phosphorylation. The respiratory chain contains 3 multisubunit complexes succinate dehydrogenase (complex II, CII), ubiquinol-cytochrome c oxidoreductase (cytochrome b-c1 complex, complex III, CIII) and cytochrome c oxidase (complex IV, CIV), that cooperate to transfer electrons derived from NADH and succinate to molecular oxygen, creating an electrochemical gradient over the inner membrane that drives transmembrane transport and the ATP synthase. Cytochrome c oxidase is the component of the respiratory chain that catalyzes the reduction of oxygen to water. Electrons originating from reduced cytochrome c in the intermembrane space (IMS) are transferred via the dinuclear copper A center (CU(A)) of subunit 2 and heme A of subunit 1 to the active site in subunit 1, a binuclear center (BNC) formed by heme A3 and copper B (CU(B)). The BNC reduces molecular oxygen to 2 water molecules using 4 electrons from cytochrome c in the IMS and 4 protons from the mitochondrial matrix. The sequence is that of Cytochrome c oxidase subunit 8B, mitochondrial (COX8B) from Carlito syrichta (Philippine tarsier).